We begin with the raw amino-acid sequence, 339 residues long: Glycerol-3-phosphate dehydrogenase [NAD(P)+] (339 aa).

The NADPH site is built by Ser15, Tyr16, His36, and Lys110. Positions 110, 139, and 141 each coordinate sn-glycerol 3-phosphate. Residue Ala143 coordinates NADPH. Sn-glycerol 3-phosphate is bound by residues Lys195, Asp248, Ser258, Arg259, and Asn260. Lys195 serves as the catalytic Proton acceptor. Residue Arg259 participates in NADPH binding. Val283 and Glu285 together coordinate NADPH.

It belongs to the NAD-dependent glycerol-3-phosphate dehydrogenase family.

Its subcellular location is the cytoplasm. It carries out the reaction sn-glycerol 3-phosphate + NAD(+) = dihydroxyacetone phosphate + NADH + H(+). The catalysed reaction is sn-glycerol 3-phosphate + NADP(+) = dihydroxyacetone phosphate + NADPH + H(+). Its pathway is membrane lipid metabolism; glycerophospholipid metabolism. In terms of biological role, catalyzes the reduction of the glycolytic intermediate dihydroxyacetone phosphate (DHAP) to sn-glycerol 3-phosphate (G3P), the key precursor for phospholipid synthesis. This Erwinia tasmaniensis (strain DSM 17950 / CFBP 7177 / CIP 109463 / NCPPB 4357 / Et1/99) protein is Glycerol-3-phosphate dehydrogenase [NAD(P)+].